Here is a 312-residue protein sequence, read N- to C-terminus: Lipoyl synthase (312 aa).

The segment covering 1-10 (MNEAPAEKQK) has biased composition (basic and acidic residues). Positions 1–20 (MNEAPAEKQKPQQGKRFSER) are disordered. Positions 51, 56, 62, 77, 81, 84, and 290 each coordinate [4Fe-4S] cluster. Residues 63–280 (WSRKTATYLA…RSVGESLGLF (218 aa)) enclose the Radical SAM core domain.

The protein belongs to the radical SAM superfamily. Lipoyl synthase family. Requires [4Fe-4S] cluster as cofactor.

It is found in the cytoplasm. It catalyses the reaction [[Fe-S] cluster scaffold protein carrying a second [4Fe-4S](2+) cluster] + N(6)-octanoyl-L-lysyl-[protein] + 2 oxidized [2Fe-2S]-[ferredoxin] + 2 S-adenosyl-L-methionine + 4 H(+) = [[Fe-S] cluster scaffold protein] + N(6)-[(R)-dihydrolipoyl]-L-lysyl-[protein] + 4 Fe(3+) + 2 hydrogen sulfide + 2 5'-deoxyadenosine + 2 L-methionine + 2 reduced [2Fe-2S]-[ferredoxin]. It functions in the pathway protein modification; protein lipoylation via endogenous pathway; protein N(6)-(lipoyl)lysine from octanoyl-[acyl-carrier-protein]: step 2/2. Its function is as follows. Catalyzes the radical-mediated insertion of two sulfur atoms into the C-6 and C-8 positions of the octanoyl moiety bound to the lipoyl domains of lipoate-dependent enzymes, thereby converting the octanoylated domains into lipoylated derivatives. This chain is Lipoyl synthase, found in Chlamydia felis (strain Fe/C-56) (Chlamydophila felis).